Reading from the N-terminus, the 447-residue chain is Phosphoglucosamine mutase (447 aa).

S105 acts as the Phosphoserine intermediate in catalysis. Mg(2+)-binding residues include S105, D244, D246, and D248. The residue at position 105 (S105) is a Phosphoserine.

This sequence belongs to the phosphohexose mutase family. The cofactor is Mg(2+). Activated by phosphorylation.

The enzyme catalyses alpha-D-glucosamine 1-phosphate = D-glucosamine 6-phosphate. In terms of biological role, catalyzes the conversion of glucosamine-6-phosphate to glucosamine-1-phosphate. This Polynucleobacter asymbioticus (strain DSM 18221 / CIP 109841 / QLW-P1DMWA-1) (Polynucleobacter necessarius subsp. asymbioticus) protein is Phosphoglucosamine mutase.